Here is a 65-residue protein sequence, read N- to C-terminus: Large ribosomal subunit protein bL35 (65 aa).

Belongs to the bacterial ribosomal protein bL35 family.

This is Large ribosomal subunit protein bL35 from Buchnera aphidicola subsp. Cinara cedri (strain Cc).